A 218-amino-acid chain; its full sequence is Glutathione S-transferase Mu 4 (218 aa).

Residues 1-88 form the GST N-terminal domain; sequence MPMTLGYWDI…YIARKHNLCG (88 aa). Glutathione contacts are provided by residues 7-8, 46-50, 59-60, and 72-73; these read YW, WLSEK, NL, and QS. Residues 90–208 form the GST C-terminal domain; the sequence is TEEEKIRVDI…KTSRFLRTPL (119 aa). Residue Tyr-116 participates in substrate binding.

This sequence belongs to the GST superfamily. Mu family. As to quaternary structure, homodimer. As to expression, widely expressed.

Its subcellular location is the cytoplasm. It catalyses the reaction RX + glutathione = an S-substituted glutathione + a halide anion + H(+). The enzyme catalyses 1-chloro-2,4-dinitrobenzene + glutathione = 2,4-dinitrophenyl-S-glutathione + chloride + H(+). The catalysed reaction is (13S,14S)-epoxy-(4Z,7Z,9E,11E,16Z,19Z)-docosahexaenoate + glutathione = (13R)-S-glutathionyl-(14S)-hydroxy-(4Z,7Z,9E,11E,16Z,19Z)-docosahexaenoate. It carries out the reaction leukotriene C4 = leukotriene A4 + glutathione. Conjugation of reduced glutathione to a wide number of exogenous and endogenous hydrophobic electrophiles. Catalyzes the conjugation of leukotriene A4 with reduced glutathione (GSH) to form leukotriene C4. Can also catalyze the transfer of a glutathionyl group from glutathione (GSH) to 13(S),14(S)-epoxy-docosahexaenoic acid to form maresin conjugate in tissue regeneration 1 (MCTR1), a bioactive lipid mediator that possess potent anti-inflammatory and proresolving actions. This Mus musculus (Mouse) protein is Glutathione S-transferase Mu 4.